The primary structure comprises 244 residues: HTH-type transcriptional regulator Cmr (244 aa).

41–160 (GSAPLHRDDV…RRWLSSVAQR (120 aa)) provides a ligand contact to a nucleoside 3',5'-cyclic phosphate. The region spanning 174–237 (RPLPAQVAQL…YAVIEITDQH (64 aa)) is the HTH crp-type domain. Residues 197–216 (QRTLAAMLGAQRPSINKILK) constitute a DNA-binding region (H-T-H motif).

Positively regulates the expression of at least groEL2. In Mycobacterium tuberculosis (strain CDC 1551 / Oshkosh), this protein is HTH-type transcriptional regulator Cmr (cmr).